We begin with the raw amino-acid sequence, 464 residues long: MSTPTLPNLSQLHGIQNQSLQQQQQQQPQQQQQPQQQQQQQQPQQTMQQPIQNLHQQAPQMQQPQYNLHTTLPPPLMNPNGLGLMGHNMMGGGNNGNNSGNNNGQPQMHGTNLNGLSLAIQNQSSLPQPINNNNNNNNNNSNINNNNNNSNNNNNNNNSNLGINSSPTQSSANSADKRSRGRPRKNPPSEPKDTSGPKRKRGRPPKMDEEGNPQPKPVPQPGSNKKRGRPKKPKDENESDYNNTSFSDSNTDGTPKKRGRPPKAKGDSPSASPTHNTLGNGILNSNNNNNNNNNNSNINNINNNNNNNSNNNNNSSNNNNNNNNSTNNNTNNNNNNTNNNTNNNNNNINNNNNNTNNNNNNANNQNTNNNNMGNNSNNNNNPNNNNHQNNNNNNTSNNSNTTTATTTAPGGNNLTNSLNNAGNLGNLGRVSGLHSSDPNNPNAQKSFPDSTNTMDFQPNFSFFH.

The span at 1 to 15 (MSTPTLPNLSQLHGI) shows a compositional bias: polar residues. Disordered regions lie at residues 1-112 (MSTP…HGTN) and 125-464 (SLPQ…SFFH). 3 stretches are compositionally biased toward low complexity: residues 16–65 (QNQS…QQPQ), 78–88 (NPNGLGLMGHN), and 130–160 (INNN…NNSN). Polar residues predominate over residues 161–174 (LGINSSPTQSSANS). 3 DNA-binding regions (a.T hook) span residues 177 to 189 (KRSR…NPPS), 198 to 210 (KRKR…MDEE), and 224 to 236 (NKKR…PKDE). Over residues 240 to 253 (DYNNTSFSDSNTDG) the composition is skewed to polar residues. A DNA-binding region (a.T hook 4) is located at residues 255 to 267 (PKKRGRPPKAKGD). A compositionally biased stretch (low complexity) spans 276 to 428 (NTLGNGILNS…NNAGNLGNLG (153 aa)). Polar residues predominate over residues 433-464 (LHSSDPNNPNAQKSFPDSTNTMDFQPNFSFFH).

The chain is AAC-rich mRNA clone AAC11 protein (AAC11) from Dictyostelium discoideum (Social amoeba).